The primary structure comprises 390 residues: Elongation factor Ts, mitochondrial (390 aa).

It belongs to the EF-Ts family.

The protein localises to the mitochondrion. Its function is as follows. Associates with the EF-Tu.GDP complex and induces the exchange of GDP to GTP. It remains bound to the aminoacyl-tRNA.EF-Tu.GTP complex up to the GTP hydrolysis stage on the ribosome. The polypeptide is Elongation factor Ts, mitochondrial (Plasmodium falciparum (isolate 3D7)).